We begin with the raw amino-acid sequence, 411 residues long: Methylthioribose-1-phosphate isomerase (411 aa).

Residue Asp284 is the Proton donor of the active site.

Belongs to the eIF-2B alpha/beta/delta subunits family. MtnA subfamily.

It is found in the cytoplasm. The protein resides in the nucleus. The enzyme catalyses 5-(methylsulfanyl)-alpha-D-ribose 1-phosphate = 5-(methylsulfanyl)-D-ribulose 1-phosphate. It functions in the pathway amino-acid biosynthesis; L-methionine biosynthesis via salvage pathway; L-methionine from S-methyl-5-thio-alpha-D-ribose 1-phosphate: step 1/6. Catalyzes the interconversion of methylthioribose-1-phosphate (MTR-1-P) into methylthioribulose-1-phosphate (MTRu-1-P). The protein is Methylthioribose-1-phosphate isomerase of Komagataella phaffii (strain GS115 / ATCC 20864) (Yeast).